A 301-amino-acid chain; its full sequence is Chitin deacetylase 1 (301 aa).

Residues 1-24 form the signal peptide; sequence MKIFNTIQSVLFAAFFLKQGNCLA. N-linked (GlcNAc...) asparagine glycans are attached at residues N26, N50, and N68. An intrachain disulfide couples C107 to C290. The 181-residue stretch at 108-288 folds into the NodB homology domain; the sequence is FKLSQTFDDG…LIGSDQLTIA (181 aa). The active-site Proton acceptor is D115. Residue D115 participates in acetate binding. Residues D116, H162, and H166 each contribute to the Co(2+) site. N189 is a glycosylation site (N-linked (GlcNAc...) asparagine). Y203 contributes to the acetate binding site. H263 acts as the Proton donor in catalysis.

The protein belongs to the polysaccharide deacetylase family. Co(2+) is required as a cofactor.

It is found in the prospore. It carries out the reaction [(1-&gt;4)-N-acetyl-beta-D-glucosaminyl](n) + n H2O = chitosan + n acetate. Hydrolyzes the N-acetamido groups of N-acetyl-D-glucosamine residues in chitin to form chitosan and acetate. Chitosan is a component of the spore wall. The chain is Chitin deacetylase 1 from Saccharomyces cerevisiae (strain ATCC 204508 / S288c) (Baker's yeast).